The following is a 241-amino-acid chain: Corrinoid adenosyltransferase MMAB (241 aa).

A mitochondrion-targeting transit peptide spans 1–26 (MAVWGPGGRLGLRGCLGARKLLCPRF). Positions 27–69 (QSRGPQGVEDGDRPQPSSKTPKVPKIYTKTGDKGFSSTFTGER) are disordered. ATP is bound by residues 54–63 (TKTGDKGFSS) and K72. S128 is subject to Phosphoserine. 184–188 (RRAER) contacts ATP. At K205 the chain carries N6-succinyllysine. N208 lines the ATP pocket. K224 carries the N6-acetyllysine; alternate modification. N6-succinyllysine; alternate is present on K224.

This sequence belongs to the Cob(I)alamin adenosyltransferase family. As to quaternary structure, homotrimer.

It localises to the mitochondrion. It carries out the reaction cob(I)alamin-[corrinoid adenosyltransferase] + ATP = apo-[corrinoid adenosyltransferase] + adenosylcob(III)alamin + triphosphate. Functionally, converts cob(I)alamin to adenosylcobalamin (adenosylcob(III)alamin), a coenzyme for methylmalonyl-CoA mutase, therefore participates in the final step of the vitamin B12 conversion. Generates adenosylcobalamin (AdoCbl) and directly delivers the cofactor to MUT in a transfer that is stimulated by ATP-binding to MMAB and gated by MMAA. The polypeptide is Corrinoid adenosyltransferase MMAB (Bos taurus (Bovine)).